Consider the following 1389-residue polypeptide: DNA-directed RNA polymerase subunit beta'' (1389 aa).

The Zn(2+) site is built by Cys224, Cys295, Cys302, and Cys305.

The protein belongs to the RNA polymerase beta' chain family. RpoC2 subfamily. In terms of assembly, in plastids the minimal PEP RNA polymerase catalytic core is composed of four subunits: alpha, beta, beta', and beta''. When a (nuclear-encoded) sigma factor is associated with the core the holoenzyme is formed, which can initiate transcription. Zn(2+) is required as a cofactor.

It localises to the plastid. The protein resides in the chloroplast. It carries out the reaction RNA(n) + a ribonucleoside 5'-triphosphate = RNA(n+1) + diphosphate. In terms of biological role, DNA-dependent RNA polymerase catalyzes the transcription of DNA into RNA using the four ribonucleoside triphosphates as substrates. The protein is DNA-directed RNA polymerase subunit beta'' of Atropa belladonna (Belladonna).